A 568-amino-acid polypeptide reads, in one-letter code: Lipoprotein LpqB (568 aa).

An N-terminal signal peptide occupies residues 1–23 (MSKISTKLKALSAVLSVTTLVAG). The N-palmitoyl cysteine moiety is linked to residue cysteine 24. Cysteine 24 carries S-diacylglycerol cysteine lipidation.

This sequence belongs to the LpqB lipoprotein family.

Its subcellular location is the cell membrane. The polypeptide is Lipoprotein LpqB (Corynebacterium glutamicum (strain R)).